The primary structure comprises 496 residues: L-arabinose isomerase (496 aa).

Positions 306, 331, 348, and 447 each coordinate Mn(2+).

This sequence belongs to the arabinose isomerase family. In terms of assembly, homotetramer. Requires Mn(2+) as cofactor.

It catalyses the reaction beta-L-arabinopyranose = L-ribulose. It participates in carbohydrate degradation; L-arabinose degradation via L-ribulose; D-xylulose 5-phosphate from L-arabinose (bacterial route): step 1/3. Inhibited by copper. Its function is as follows. Catalyzes the conversion of L-arabinose to L-ribulose. In vitro, converts D-galactose into D-tagatose. This is L-arabinose isomerase (araA) from Geobacillus stearothermophilus (Bacillus stearothermophilus).